The primary structure comprises 260 residues: Dehydrin ERD10 (260 aa).

Disordered stretches follow at residues 1 to 187 (MAEE…EEEK), 197 to 216 (KLPGHSKKPEDSQVVNTTPL), and 240 to 260 (KLPGYHAKTTGEEEKKEKVSD). At Ala2 the chain carries N-acetylalanine. Residues 26–44 (EIKERGMFDFLKKKEEVKP) show a composition bias toward basic and acidic residues. Phosphoserine is present on Ser61. Basic and acidic residues-rich tracts occupy residues 67–102 (VAKHEEEEHKPTLLEQLHQKHEEEEENKPSLLDKLH), 130–140 (IVEGDHVKTVE), 148–162 (DRIKEKFPLGEKPGG), 176–187 (SVEDHKPEEEEK), and 197–207 (KLPGHSKKPED). 2 tandem repeats follow at residues 184–204 (EEEKKGFMDKIKEKLPGHSKK) and 227–247 (PEEKKGFMDKIKEKLPGYHAK). Residues 184-247 (EEEKKGFMDK…KEKLPGYHAK (64 aa)) are 2 X 21 AA repeats, Lys-rich.

Belongs to the plant dehydrin family. In stems, cauline leaves, roots and flowers. Low levels found in maturing seeds. Absent in dry seeds.

The chain is Dehydrin ERD10 (ERD10) from Arabidopsis thaliana (Mouse-ear cress).